Reading from the N-terminus, the 237-residue chain is uncharacterized protein (237 aa).

Transmembrane regions (helical) follow at residues 19-39 (ILNG…GLAW), 51-71 (YDSP…YGLS), 81-101 (IAGV…ASLV), 106-126 (IIIV…AGLL), 136-156 (FIIM…AALM), 159-179 (RPIW…ISHG), and 209-229 (LYYY…TLVW).

It localises to the cell membrane. This is an uncharacterized protein from Escherichia coli (strain K12).